A 381-amino-acid polypeptide reads, in one-letter code: N-acetylglucosamine-6-phosphate deacetylase (381 aa).

Glu-129 lines the a divalent metal cation pocket. Substrate is bound at residue 140 to 141; that stretch reads VH. Positions 193 and 214 each coordinate a divalent metal cation. Residues 217–218, Arg-226, and 246–249 contribute to the substrate site; these read NA and DGVH. The active-site Proton donor/acceptor is the Asp-271. 306 to 308 is a substrate binding site; the sequence is IAG.

This sequence belongs to the metallo-dependent hydrolases superfamily. NagA family. As to quaternary structure, homotetramer. It depends on a divalent metal cation as a cofactor.

The catalysed reaction is N-acetyl-D-glucosamine 6-phosphate + H2O = D-glucosamine 6-phosphate + acetate. Its pathway is amino-sugar metabolism; N-acetylneuraminate degradation; D-fructose 6-phosphate from N-acetylneuraminate: step 4/5. Involved in the first committed step in the biosynthesis of amino-sugar-nucleotides. Catalyzes the hydrolysis of the N-acetyl group of N-acetylglucosamine-6-phosphate (GlcNAc-6-P) to yield glucosamine 6-phosphate and acetate. The polypeptide is N-acetylglucosamine-6-phosphate deacetylase (nagA) (Haemophilus influenzae (strain ATCC 51907 / DSM 11121 / KW20 / Rd)).